Consider the following 574-residue polypeptide: High-affinity methionine permease (574 aa).

Residues 1–61 are Cytoplasmic-facing; the sequence is MSEGRTFLSQ…TELDQGEKQL (61 aa). Lysine 28 participates in a covalent cross-link: Glycyl lysine isopeptide (Lys-Gly) (interchain with G-Cter in ubiquitin). Residues 62–82 traverse the membrane as a helical segment; the sequence is GILSCIGLICNRMLGTGVFAV. At 83–92 the chain is on the extracellular side; the sequence is SSTIYTLCGS. Residues 93 to 113 form a helical membrane-spanning segment; it reads VGLALIMWAVGAIIAISGLYV. Over 114–140 the chain is Cytoplasmic; that stretch reads YMEFGTAIPKNGGEKNYLEAIFRKPKF. A helical transmembrane segment spans residues 141–161; the sequence is FITCMYAAYIFFLGWAAGNSI. The Extracellular segment spans residues 162–182; it reads NTAIMFLTAADTEVTKWNQRG. The chain crosses the membrane as a helical span at residues 183–203; the sequence is IGVAVVFFAFLINSLNVKIGL. Over 204–207 the chain is Cytoplasmic; that stretch reads YLQN. Residues 208-228 form a helical membrane-spanning segment; the sequence is ILGIFKIGIVLFISITGWVAL. Topologically, residues 229-293 are extracellular; that stretch reads GGGLKDGYQS…VRTLKIAGPT (65 aa). A helical transmembrane segment spans residues 294 to 314; sequence SMVFLAIIYIFVNIAYFAVVP. The Cytoplasmic segment spans residues 315-340; that stretch reads KDKLISSKLILAADFFDIVFGGQAKR. The helical transmembrane segment at 341-361 threads the bilayer; that stretch reads AAAALVGLSALGNVLSVIFSQ. The Extracellular portion of the chain corresponds to 362–418; the sequence is GRIIQQLGREGVLPFSNFFASSKPFNSPMVGLFQHFIVCTVTILAPPPGDAYLLVQN. A helical membrane pass occupies residues 419 to 439; the sequence is LISYPMNIINFAISAGLLWIY. At 440-455 the chain is on the cytoplasmic side; the sequence is WQRRQGKIEWNPPIKA. A helical transmembrane segment spans residues 456-476; that stretch reads GVFVTGFFTLSNLYLIIAPYV. Topologically, residues 477–490 are extracellular; the sequence is PPSNGESVYSSMPY. Residues 491–511 traverse the membrane as a helical segment; it reads WIHCVIAWGIFFFGGVYYVVW. Over 512-574 the chain is Cytoplasmic; that stretch reads AQLLPRWGHY…HYKSEQEKSL (63 aa). The residue at position 552 (threonine 552) is a Phosphothreonine. Serine 573 carries the phosphoserine modification.

It to yeast low affinity methionine permease (MUP3).

Its subcellular location is the membrane. Functionally, high affinity permease for methionine. The sequence is that of High-affinity methionine permease (MUP1) from Saccharomyces cerevisiae (strain ATCC 204508 / S288c) (Baker's yeast).